Reading from the N-terminus, the 46-residue chain is Escargot/snail protein homolog (46 aa).

3 C2H2-type zinc fingers span residues H1–H4, C9–H30, and S36–A46.

It belongs to the snail C2H2-type zinc-finger protein family.

Its subcellular location is the nucleus. In Lithobius forficatus (Centipede), this protein is Escargot/snail protein homolog.